The primary structure comprises 226 residues: MNENLFTSFITPVILGLPLVTLIVLFPSLLFPTSNRLVSNRFVTLQQWMLQLVSKQMMSIHNSKGQTWTLMLMSLILFIGSTNLLGLLPHSFTPTTQLSMNLGMAIPLWAGAVITGFRNKTKASLAHFLPQGTPTPLIPMLVIIETISLFIQPMALAVRLTANITAGHLLIHLIGGATLALMSISTTTALITFTILILLTILEFAVAMIQAYVFTLLVSLYLHDNT.

Position 1 is an N-formylmethionine (methionine 1). A run of 6 helical transmembrane segments spans residues 9 to 29, 68 to 88, 97 to 117, 138 to 158, 164 to 184, and 189 to 209; these read FITP…FPSL, WTLM…LGLL, QLSM…ITGF, IPML…ALAV, ITAG…LMSI, and ALIT…VAMI.

This sequence belongs to the ATPase A chain family. Component of the ATP synthase complex composed at least of ATP5F1A/subunit alpha, ATP5F1B/subunit beta, ATP5MC1/subunit c (homooctomer), MT-ATP6/subunit a, MT-ATP8/subunit 8, ATP5ME/subunit e, ATP5MF/subunit f, ATP5MG/subunit g, ATP5MK/subunit k, ATP5MJ/subunit j, ATP5F1C/subunit gamma, ATP5F1D/subunit delta, ATP5F1E/subunit epsilon, ATP5PF/subunit F6, ATP5PB/subunit b, ATP5PD/subunit d, ATP5PO/subunit OSCP. ATP synthase complex consists of a soluble F(1) head domain (subunits alpha(3) and beta(3)) - the catalytic core - and a membrane F(0) domain - the membrane proton channel (subunits c, a, 8, e, f, g, k and j). These two domains are linked by a central stalk (subunits gamma, delta, and epsilon) rotating inside the F1 region and a stationary peripheral stalk (subunits F6, b, d, and OSCP). Interacts with DNAJC30; interaction is direct.

The protein resides in the mitochondrion inner membrane. The enzyme catalyses H(+)(in) = H(+)(out). Its function is as follows. Subunit a, of the mitochondrial membrane ATP synthase complex (F(1)F(0) ATP synthase or Complex V) that produces ATP from ADP in the presence of a proton gradient across the membrane which is generated by electron transport complexes of the respiratory chain. ATP synthase complex consist of a soluble F(1) head domain - the catalytic core - and a membrane F(1) domain - the membrane proton channel. These two domains are linked by a central stalk rotating inside the F(1) region and a stationary peripheral stalk. During catalysis, ATP synthesis in the catalytic domain of F(1) is coupled via a rotary mechanism of the central stalk subunits to proton translocation. With the subunit c (ATP5MC1), forms the proton-conducting channel in the F(0) domain, that contains two crucial half-channels (inlet and outlet) that facilitate proton movement from the mitochondrial intermembrane space (IMS) into the matrix. Protons are taken up via the inlet half-channel and released through the outlet half-channel, following a Grotthuss mechanism. The polypeptide is ATP synthase F(0) complex subunit a (Bos taurus (Bovine)).